The sequence spans 224 residues: tRNA (guanine-N(7)-)-methyltransferase (224 aa).

Residues glutamate 56, glutamate 81, aspartate 108, and aspartate 131 each contribute to the S-adenosyl-L-methionine site. Residue aspartate 131 is part of the active site. Residues lysine 135, aspartate 167, and threonine 202 to glutamate 205 contribute to the substrate site.

Belongs to the class I-like SAM-binding methyltransferase superfamily. TrmB family.

The enzyme catalyses guanosine(46) in tRNA + S-adenosyl-L-methionine = N(7)-methylguanosine(46) in tRNA + S-adenosyl-L-homocysteine. Its pathway is tRNA modification; N(7)-methylguanine-tRNA biosynthesis. Its function is as follows. Catalyzes the formation of N(7)-methylguanine at position 46 (m7G46) in tRNA. This chain is tRNA (guanine-N(7)-)-methyltransferase, found in Nitrosomonas eutropha (strain DSM 101675 / C91 / Nm57).